We begin with the raw amino-acid sequence, 921 residues long: Isoleucine--tRNA ligase (921 aa).

The short motif at 57–67 is the 'HIGH' region element; the sequence is PYANGELHMGH. Glu552 is a binding site for L-isoleucyl-5'-AMP. A 'KMSKS' region motif is present at residues 593–597; it reads KMSKS. Lys596 lines the ATP pocket. The Zn(2+) site is built by Cys888, Cys891, Cys908, and Cys911.

The protein belongs to the class-I aminoacyl-tRNA synthetase family. IleS type 1 subfamily. Monomer. Zn(2+) is required as a cofactor.

It is found in the cytoplasm. The catalysed reaction is tRNA(Ile) + L-isoleucine + ATP = L-isoleucyl-tRNA(Ile) + AMP + diphosphate. In terms of biological role, catalyzes the attachment of isoleucine to tRNA(Ile). As IleRS can inadvertently accommodate and process structurally similar amino acids such as valine, to avoid such errors it has two additional distinct tRNA(Ile)-dependent editing activities. One activity is designated as 'pretransfer' editing and involves the hydrolysis of activated Val-AMP. The other activity is designated 'posttransfer' editing and involves deacylation of mischarged Val-tRNA(Ile). The protein is Isoleucine--tRNA ligase of Listeria innocua serovar 6a (strain ATCC BAA-680 / CLIP 11262).